The following is a 165-amino-acid chain: Glycine cleavage system H protein, mitochondrial (165 aa).

The transit peptide at 1–34 (MALRMWASSTANALKLSSSSRLHLSPTFSISRCF) directs the protein to the mitochondrion. The region spanning 56–138 (VATIGITDHA…YEDGWMIKIK (83 aa)) is the Lipoyl-binding domain. Residue Lys-97 is modified to N6-lipoyllysine.

It belongs to the GcvH family. In terms of assembly, the glycine cleavage system is composed of four proteins: P, T, L and H. (R)-lipoate serves as cofactor.

The protein resides in the mitochondrion. The glycine cleavage system catalyzes the degradation of glycine. The H protein shuttles the methylamine group of glycine from the P protein to the T protein. This Pisum sativum (Garden pea) protein is Glycine cleavage system H protein, mitochondrial (GDCSH).